Reading from the N-terminus, the 423-residue chain is Maintenance of mitochondrial morphology protein 1 (423 aa).

Residues methionine 1 to glycine 20 are Lumenal-facing. A helical membrane pass occupies residues leucine 21–phenylalanine 41. Over glycine 42–threonine 423 the chain is Cytoplasmic. Positions glutamine 115–proline 327 constitute an SMP-LTD domain. Disordered stretches follow at residues arginine 332–glutamate 372 and serine 387–threonine 423. The segment covering arginine 355–glutamate 372 has biased composition (basic and acidic residues).

The protein belongs to the MMM1 family. In terms of assembly, homodimer. Component of the ER-mitochondria encounter structure (ERMES) or MDM complex, composed of MMM1, MDM10, MDM12 and MDM34. An MMM1 homodimer associates with one molecule of MDM12 on each side in a pairwise head-to-tail manner, and the SMP-LTD domains of MMM1 and MDM12 generate a continuous hydrophobic tunnel for phospholipid trafficking.

The protein localises to the endoplasmic reticulum membrane. Component of the ERMES/MDM complex, which serves as a molecular tether to connect the endoplasmic reticulum (ER) and mitochondria. Components of this complex are involved in the control of mitochondrial shape and protein biogenesis, and function in nonvesicular lipid trafficking between the ER and mitochondria. The MDM12-MMM1 subcomplex functions in the major beta-barrel assembly pathway that is responsible for biogenesis of all outer membrane beta-barrel proteins, and acts in a late step after the SAM complex. The MDM10-MDM12-MMM1 subcomplex further acts in the TOM40-specific pathway after the action of the MDM12-MMM1 complex. Essential for establishing and maintaining the structure of mitochondria and maintenance of mtDNA nucleoids. The sequence is that of Maintenance of mitochondrial morphology protein 1 from Botryotinia fuckeliana (strain B05.10) (Noble rot fungus).